The following is a 473-amino-acid chain: Glucose facilitated diffusion protein (473 aa).

The Cytoplasmic portion of the chain corresponds to 1 to 13 (MSSESSQGLVTRL). Residues 14-34 (ALIAAIGGLLFGYDSAVIAAI) form a helical membrane-spanning segment. The Periplasmic portion of the chain corresponds to 35 to 59 (GTPVDIHFIAPRHLSATAAASLSGM). The helical transmembrane segment at 60-80 (VVVAVLVGCVTGSLLSGWIGI) threads the bilayer. Topologically, residues 81 to 85 (RFGRR) are cytoplasmic. The helical transmembrane segment at 86-106 (GGLLMSSICFVAAGFGAALTE) threads the bilayer. Residues 107-112 (KLFGTG) lie on the Periplasmic side of the membrane. Residues 113-133 (GSALQIFCFFRFLAGLGIGVV) form a helical membrane-spanning segment. At 134–158 (STLTPTYIAEIAPPDKRGQMVSGQQ) the chain is on the cytoplasmic side. Residues 159–179 (MAIVTGALTGYIFTWLLAHFG) traverse the membrane as a helical segment. Over 180-187 (SIDWVNAS) the chain is Periplasmic. A helical membrane pass occupies residues 188-208 (GWCWSPASEGLIGIAFLLLLL). Residues 209–257 (TAPDTPHWLVMKGRHSEASKILARLEPQADPNLTIQKIKAGFDKAMDKS) lie on the Cytoplasmic side of the membrane. A helical membrane pass occupies residues 258–278 (SAGLFAFGITVVFAGVSVAAF). The Periplasmic segment spans residues 279–303 (QQLVGINAVLYYAPQMFQNLGFGAD). The chain crosses the membrane as a helical span at residues 304 to 324 (TALLQTISIGVVNFIFTMIAS). Residues 325–335 (RVVDRFGRKPL) lie on the Cytoplasmic side of the membrane. Residues 336-356 (LIWGALGMAAMMAVLGCCFWF) traverse the membrane as a helical segment. Topologically, residues 357 to 366 (KVGGVLPLAS) are periplasmic. The chain crosses the membrane as a helical span at residues 367-387 (VLLYIAVFGMSWGPVCWVVLS). Topologically, residues 388–396 (EMFPSSIKG) are cytoplasmic. The helical transmembrane segment at 397–417 (AAMPIAVTGQWLANILVNFLF) threads the bilayer. Residues 418-429 (KVADGSPALNQT) are Periplasmic-facing. Residues 430–450 (FNHGFSYLVFAALSILGGLIV) form a helical membrane-spanning segment. The Cytoplasmic portion of the chain corresponds to 451–473 (ARFVPETKGRSLDEIEEMWRSQK).

Belongs to the major facilitator superfamily. Sugar transporter (TC 2.A.1.1) family.

It localises to the cell inner membrane. Its function is as follows. Allows uptake of glucose by the cell; allows growth on glucose minimal medium by E.coli cells impaired in glucose transport. Also transports fructose, but has a strong preference for glucose. This chain is Glucose facilitated diffusion protein, found in Zymomonas mobilis subsp. mobilis (strain ATCC 31821 / ZM4 / CP4).